The following is a 173-amino-acid chain: Disulfide bond formation protein B (173 aa).

The Cytoplasmic portion of the chain corresponds to 1–14; that stretch reads MIEFLRRIAAHRLA. A helical transmembrane segment spans residues 15–31; sequence WSLLAASALFLELSALF. Over 32–49 the chain is Periplasmic; it reads FQHVLGLHPCVMCVYERI. C41 and C44 form a disulfide bridge. Residues 50 to 65 traverse the membrane as a helical segment; that stretch reads ATLGVLTAGLLGMVAP. Residues 66–72 lie on the Cytoplasmic side of the membrane; it reads QKWYVRW. A helical membrane pass occupies residues 73-90; that stretch reads SALLLWGSSAFWGLKLAL. The Periplasmic portion of the chain corresponds to 91–145; the sequence is KHVDYQVNPSPFNVCEGFVDFPSWAPLDQWIPWMFYPDGDCSEVTWQFLSFSMPQ. C105 and C131 are joined by a disulfide. A helical transmembrane segment spans residues 146–164; the sequence is WLVAIFAVYLLVFVVVAIG. The Cytoplasmic segment spans residues 165-173; that stretch reads NLVKGRCCS.

This sequence belongs to the DsbB family.

The protein resides in the cell inner membrane. Required for disulfide bond formation in some periplasmic proteins. Acts by oxidizing the DsbA protein. This Aeromonas hydrophila subsp. hydrophila (strain ATCC 7966 / DSM 30187 / BCRC 13018 / CCUG 14551 / JCM 1027 / KCTC 2358 / NCIMB 9240 / NCTC 8049) protein is Disulfide bond formation protein B.